A 201-amino-acid polypeptide reads, in one-letter code: Recombination protein RecR (201 aa).

The C4-type zinc-finger motif lies at 60–75 (CRRCGNVDVCDPCTIC). In terms of domain architecture, Toprim spans 83-178 (RTLVVVADVG…RVTRLAQGVP (96 aa)).

The protein belongs to the RecR family.

Functionally, may play a role in DNA repair. It seems to be involved in an RecBC-independent recombinational process of DNA repair. It may act with RecF and RecO. This is Recombination protein RecR from Xanthobacter autotrophicus (strain ATCC BAA-1158 / Py2).